The primary structure comprises 528 residues: tRNA-2-methylthio-N(6)-dimethylallyladenosine synthase (528 aa).

The MTTase N-terminal domain occupies 19–134; the sequence is RTYEVRTYGC…LPTLLERARH (116 aa). [4Fe-4S] cluster-binding residues include C28, C63, C97, C171, C175, and C178. The region spanning 157–387 is the Radical SAM core domain; the sequence is RDEIASGWVS…TALQERISHE (231 aa). Positions 390 to 460 constitute a TRAM domain; it reads QRVVGRTVEV…PFHLIADSVD (71 aa).

It belongs to the methylthiotransferase family. MiaB subfamily. Monomer. [4Fe-4S] cluster serves as cofactor.

It is found in the cytoplasm. The catalysed reaction is N(6)-dimethylallyladenosine(37) in tRNA + (sulfur carrier)-SH + AH2 + 2 S-adenosyl-L-methionine = 2-methylsulfanyl-N(6)-dimethylallyladenosine(37) in tRNA + (sulfur carrier)-H + 5'-deoxyadenosine + L-methionine + A + S-adenosyl-L-homocysteine + 2 H(+). Catalyzes the methylthiolation of N6-(dimethylallyl)adenosine (i(6)A), leading to the formation of 2-methylthio-N6-(dimethylallyl)adenosine (ms(2)i(6)A) at position 37 in tRNAs that read codons beginning with uridine. The protein is tRNA-2-methylthio-N(6)-dimethylallyladenosine synthase of Clavibacter michiganensis subsp. michiganensis (strain NCPPB 382).